A 587-amino-acid chain; its full sequence is Glutamine--tRNA ligase (587 aa).

Residues 58-68 (PEPNGYLHIGH) carry the 'HIGH' region motif. Residues 59–61 (EPN) and 65–71 (HIGHAKS) each bind ATP. L-glutamine-binding residues include Asp91 and Tyr240. Residues Thr259 and 294-295 (RL) contribute to the ATP site. The 'KMSKS' region motif lies at 301–305 (VTSKR).

Belongs to the class-I aminoacyl-tRNA synthetase family. In terms of assembly, monomer.

It localises to the cytoplasm. The enzyme catalyses tRNA(Gln) + L-glutamine + ATP = L-glutaminyl-tRNA(Gln) + AMP + diphosphate. This Bordetella parapertussis (strain 12822 / ATCC BAA-587 / NCTC 13253) protein is Glutamine--tRNA ligase.